The sequence spans 455 residues: Immunoglobulin alpha-2 heavy chain (455 aa).

4 Ig-like domains span residues 1-95 (EVQL…VYYC), 121-213 (PKVF…QDVT), 227-322 (PRLS…ANIT), and 330-432 (PEVH…KTID). A variable (V) domain, involved in antigen recognition region spans residues 1–115 (EVQLVETGGG…GKGTTVTVSS (115 aa)). 2 cysteine pairs are disulfide-bonded: C22–C95 and C141–C200. The constant (C) domain stretch occupies residues 116-455 (ASPTSPKVFP…VMAEADGTCY (340 aa)). 3 N-linked (GlcNAc...) asparagine glycosylation sites follow: N162, N207, and N246. 2 disulfides stabilise this stretch: C225–C282 and C249–C306. The N-linked (GlcNAc...) asparagine glycan is linked to N320. C352 and C415 are joined by a disulfide. A glycan (N-linked (GlcNAc...) asparagine) is linked at N442.

As to quaternary structure, immunoglobulins are composed of two identical heavy chains and two identical light chains; disulfide-linked. Monomeric or polymeric.

It is found in the secreted. Its subcellular location is the cell membrane. Immunoglobulins, also known as antibodies, are membrane-bound or secreted glycoproteins produced by B lymphocytes. In the recognition phase of humoral immunity, the membrane-bound immunoglobulins serve as receptors which, upon binding of a specific antigen, trigger the clonal expansion and differentiation of B lymphocytes into immunoglobulins-secreting plasma cells. Secreted immunoglobulins mediate the effector phase of humoral immunity, which results in the elimination of bound antigens. The antigen binding site is formed by the variable domain of one heavy chain, together with that of its associated light chain. Thus, each immunoglobulin has two antigen binding sites with remarkable affinity for a particular antigen. The variable domains are assembled by a process called V-(D)-J rearrangement and can then be subjected to somatic hypermutations which, after exposure to antigen and selection, allow affinity maturation for a particular antigen. Ig alpha is the major immunoglobulin class in body secretions. This Homo sapiens (Human) protein is Immunoglobulin alpha-2 heavy chain.